The primary structure comprises 426 residues: UDP-N-acetylglucosamine 1-carboxyvinyltransferase (426 aa).

22-23 (KN) is a phosphoenolpyruvate binding site. A UDP-N-acetyl-alpha-D-glucosamine-binding site is contributed by R93. C117 functions as the Proton donor in the catalytic mechanism. Position 117 is a 2-(S-cysteinyl)pyruvic acid O-phosphothioketal (C117). UDP-N-acetyl-alpha-D-glucosamine contacts are provided by residues 162 to 165 (KVSV), D307, and I329.

Belongs to the EPSP synthase family. MurA subfamily.

Its subcellular location is the cytoplasm. It carries out the reaction phosphoenolpyruvate + UDP-N-acetyl-alpha-D-glucosamine = UDP-N-acetyl-3-O-(1-carboxyvinyl)-alpha-D-glucosamine + phosphate. It functions in the pathway cell wall biogenesis; peptidoglycan biosynthesis. Functionally, cell wall formation. Adds enolpyruvyl to UDP-N-acetylglucosamine. The polypeptide is UDP-N-acetylglucosamine 1-carboxyvinyltransferase (Haemophilus ducreyi (strain 35000HP / ATCC 700724)).